We begin with the raw amino-acid sequence, 299 residues long: Probable lipid kinase YegS (299 aa).

The 132-residue stretch at 2-133 folds into the DAGKc domain; that stretch reads AEFPASLLIL…IDMAQVNKQT (132 aa). Residues Thr-40, 66–72, and Thr-95 each bind ATP; that span reads GDGTINE. Mg(2+) is bound by residues Leu-215, Asp-218, and Leu-220. Glu-271 functions as the Proton acceptor in the catalytic mechanism.

It belongs to the diacylglycerol/lipid kinase family. YegS lipid kinase subfamily. Mg(2+) is required as a cofactor. Ca(2+) serves as cofactor.

It is found in the cytoplasm. Probably phosphorylates lipids; the in vivo substrate is unknown. This is Probable lipid kinase YegS from Escherichia coli O127:H6 (strain E2348/69 / EPEC).